A 297-amino-acid polypeptide reads, in one-letter code: GTPase Era (297 aa).

Residues Arg5 to Val173 enclose the Era-type G domain. The interval Gly13 to Ser20 is G1. Gly13–Ser20 lines the GTP pocket. The interval Gln39–Arg43 is G2. Residues Asp60 to Gly63 are G3. GTP is bound by residues Asp60–Val64 and Thr123–Asp126. Residues Thr123–Asp126 form a G4 region. Positions Val152–Ala154 are G5. The region spanning Val205–Lys283 is the KH type-2 domain.

Belongs to the TRAFAC class TrmE-Era-EngA-EngB-Septin-like GTPase superfamily. Era GTPase family. As to quaternary structure, monomer.

Its subcellular location is the cytoplasm. The protein localises to the cell membrane. Functionally, an essential GTPase that binds both GDP and GTP, with rapid nucleotide exchange. Plays a role in 16S rRNA processing and 30S ribosomal subunit biogenesis and possibly also in cell cycle regulation and energy metabolism. This chain is GTPase Era, found in Leifsonia xyli subsp. xyli (strain CTCB07).